The chain runs to 126 residues: MKIKKLTSYLLGRNYEAQAKLFLQKQGLSFIAANVKVHGGEIDLIMKDKQTWVFIEVRFRKSGQYGDALATITRSKRKKLLHAAAVWLFQRGECFETSSCRFDICAITGQQFEWLQNAFNQNEFTR.

The protein belongs to the UPF0102 family.

This chain is UPF0102 protein plu4003, found in Photorhabdus laumondii subsp. laumondii (strain DSM 15139 / CIP 105565 / TT01) (Photorhabdus luminescens subsp. laumondii).